A 112-amino-acid chain; its full sequence is Large ribosomal subunit protein mL53 (112 aa).

Belongs to the mitochondrion-specific ribosomal protein mL53 family. As to quaternary structure, component of the mitochondrial ribosome large subunit (39S) which comprises a 16S rRNA and about 50 distinct proteins.

It is found in the mitochondrion. This chain is Large ribosomal subunit protein mL53 (MRPL53), found in Bos taurus (Bovine).